Reading from the N-terminus, the 895-residue chain is AP-1 complex subunit gamma (895 aa).

HEAT repeat units follow at residues 130–166 (TAMA…LRKV), 167–205 (PDLT…MDST), 211–256 (KKMV…ILGQ), 301–339 (NGLK…TDIQ), and 341–376 (VQRH…ESNI). 3 disordered regions span residues 591-687 (KQEE…MNNM), 706-733 (NNNS…NNKS), and 746-770 (QLTP…QTSV). 5 stretches are compositionally biased toward low complexity: residues 604-626 (PTQT…QSSQ), 639-658 (QSSA…GGNA), 675-687 (NGNM…MNNM), 706-731 (NNNS…NNNN), and 746-765 (QLTP…LSPT). One can recognise a GAE domain in the interval 775–893 (PQPLTFLVYQ…SDVPDTPLPS (119 aa)).

It belongs to the adaptor complexes large subunit family. In terms of assembly, adaptor protein complex 1 (AP-1) is a heterotetramer composed of two large adaptins (gamma-type subunit and beta-type subunit), a medium adaptin (mu-type subunit) and a small adaptin (sigma-type subunit). Interacts with rhgA.

Its subcellular location is the golgi apparatus. The protein resides in the trans-Golgi network. It localises to the cytoplasmic vesicle. It is found in the clathrin-coated vesicle membrane. Its function is as follows. Subunit of clathrin-associated adaptor protein complex 1 that plays a role in protein sorting in the trans-Golgi network (TGN) and endosomes. The AP complexes mediate the recruitment of clathrin to membranes and the recognition of sorting signals within the cytosolic tails of transmembrane cargo molecules. Also involved in early steps of phagocytosis and macropinocytosis. The sequence is that of AP-1 complex subunit gamma (ap1g1) from Dictyostelium discoideum (Social amoeba).